The following is a 358-amino-acid chain: Peptide chain release factor 1 (358 aa).

N5-methylglutamine is present on Gln-233.

Belongs to the prokaryotic/mitochondrial release factor family. In terms of processing, methylated by PrmC. Methylation increases the termination efficiency of RF1.

Its subcellular location is the cytoplasm. In terms of biological role, peptide chain release factor 1 directs the termination of translation in response to the peptide chain termination codons UAG and UAA. The protein is Peptide chain release factor 1 of Listeria innocua serovar 6a (strain ATCC BAA-680 / CLIP 11262).